Reading from the N-terminus, the 370-residue chain is Gametogenetin-binding protein 1 (370 aa).

Disordered stretches follow at residues 26–114 (VGSK…QTLT) and 240–263 (PAAP…EEAV). Residues 31–49 (GSKSTNKPLTRSQPSSSWE) are compositionally biased toward polar residues. The required for induction of mitochondrial fragmentation stretch occupies residues 225–370 (LYKQLQKSAM…DEMGNWPPPD (146 aa)). The segment covering 250 to 260 (GLPHEEKGERE) has biased composition (basic and acidic residues). Residues 298 to 370 (KKFRSTDTVG…DEMGNWPPPD (73 aa)) form an interaction with GGN region.

In terms of assembly, interacts with CCDC159. Interacts with isoform 1 and isoform 2 of GGN. In terms of tissue distribution, testis-specific. In the testis, expressed only in germ cells and not in somatic cells. Expression starts in late primary spermatocytes in stage X-XII tubules and gradually increases towards step 1-3 spermatids in stage I-III tubules. Expression then declines continuously and disappears after step 7 spermatids in stage VII tubules (at protein level).

The protein resides in the cytoplasm. Its subcellular location is the membrane. It localises to the golgi apparatus. The protein localises to the mitochondrion intermembrane space. Functionally, induces mitochondrial fragmentation, possibly by promoting DNM1L-dependent fission and may play a role in mitochondrial morphogenesis during spermatogenesis. This Mus musculus (Mouse) protein is Gametogenetin-binding protein 1 (Ggnbp1).